Here is a 280-residue protein sequence, read N- to C-terminus: Type II restriction enzyme MboI (280 aa).

This sequence belongs to the DpnII type II restriction endonuclease family.

It catalyses the reaction Endonucleolytic cleavage of DNA to give specific double-stranded fragments with terminal 5'-phosphates.. Functionally, a P subtype restriction enzyme that recognizes the double-stranded unmethylated sequence 5'-GATC-3' and cleaves before G-1. In Moraxella bovis, this protein is Type II restriction enzyme MboI (mboIR).